The chain runs to 456 residues: Esterase MT1326 (456 aa).

3 LysM domains span residues 3-50 (STHA…RLIM), 54-101 (TRYT…RLIM), and 105-152 (TRYT…VLVI). Catalysis depends on residues Ser-294, Asp-391, and His-425.

This sequence belongs to the AB hydrolase superfamily.

The protein localises to the secreted. Its subcellular location is the cell wall. It catalyses the reaction a fatty acid ester + H2O = an aliphatic alcohol + a fatty acid + H(+). In terms of biological role, exhibits lipolytic activity with medium chain length esters as optimum substrates. The polypeptide is Esterase MT1326 (Mycobacterium tuberculosis (strain CDC 1551 / Oshkosh)).